A 239-amino-acid chain; its full sequence is Serine protease SplF (239 aa).

Residues 1–36 form the signal peptide; that stretch reads MNKNIIIKSIGALTILTSITGVGTTMVEGIQQTAKA. Catalysis depends on charge relay system residues His-75, Asp-114, and Ser-192.

It belongs to the peptidase S1B family.

Its subcellular location is the secreted. This Staphylococcus aureus (strain USA300) protein is Serine protease SplF (splF).